Consider the following 564-residue polypeptide: H/ACA ribonucleoprotein complex non-core subunit NAF1 (564 aa).

Disordered stretches follow at residues 1-29, 108-218, 238-264, 387-489, and 538-564; these read MESE…ELGK, LVVQ…DSEG, DEDD…KVRG, ASWE…HPSY, and PHMY…PPPS. Low complexity predominate over residues 146 to 157; sequence ASGLSLLAAYSS. A compositionally biased stretch (acidic residues) spans 238–249; the sequence is DEDDEDFDEDGA. Residue Thr-250 is modified to Phosphothreonine. Ser-254 bears the Phosphoserine mark. Residues 388 to 402 show a composition bias toward basic and acidic residues; it reads SWEHDVEPPARYVDH. The residue at position 403 (Ser-403) is a Phosphoserine. Over residues 426-446 the composition is skewed to low complexity; it reads STDSVDTVTSVATTATKASSV. The residue at position 427 (Thr-427) is a Phosphothreonine. Phosphoserine is present on Ser-429. Thr-432 carries the post-translational modification Phosphothreonine. Residues 468–489 are compositionally biased toward polar residues; that stretch reads PSINQHNQNQPQDEQYNFHPSY. The span at 538–553 shows a compositional bias: pro residues; that stretch reads PHMYPPPPPFAPPPPN. The span at 554–564 shows a compositional bias: polar residues; the sequence is NQSHQGQPPPS.

Belongs to the NAF1 family. During assembly of the complex, component of the box H/ACA small nucleolar ribonucleoprotein (H/ACA snoRNP) complex.

It localises to the nucleus. In terms of biological role, RNA-binding protein required for the maturation of the box H/ACA small nucleolar ribonucleoprotein (H/ACA snoRNP) complex and ribosome biogenesis. During assembly of the H/ACA snoRNP complex it associates with the complex and dissociates during complex maturation, becoming replaced by Gar1 to yield mature H/ACA snoRNP complex. In Drosophila melanogaster (Fruit fly), this protein is H/ACA ribonucleoprotein complex non-core subunit NAF1.